The chain runs to 329 residues: tRNA dimethylallyltransferase (329 aa).

12-19 contributes to the ATP binding site; it reads GPTSVGKT. 14–19 serves as a coordination point for substrate; it reads TSVGKT. The tract at residues 37 to 40 is interaction with substrate tRNA; the sequence is DSRY. The interval 306–329 is disordered; it reads LREESDEGDVAVHQSGGGKEAPRA. Gly residues predominate over residues 320–329; that stretch reads SGGGKEAPRA.

The protein belongs to the IPP transferase family. Monomer. Mg(2+) is required as a cofactor.

It catalyses the reaction adenosine(37) in tRNA + dimethylallyl diphosphate = N(6)-dimethylallyladenosine(37) in tRNA + diphosphate. Its function is as follows. Catalyzes the transfer of a dimethylallyl group onto the adenine at position 37 in tRNAs that read codons beginning with uridine, leading to the formation of N6-(dimethylallyl)adenosine (i(6)A). The chain is tRNA dimethylallyltransferase from Thermomicrobium roseum (strain ATCC 27502 / DSM 5159 / P-2).